We begin with the raw amino-acid sequence, 312 residues long: Dihydroorotate dehydrogenase B (NAD(+)), catalytic subunit (312 aa).

Residues Ser21 and 45-46 (KA) each bind FMN. Residues Lys45 and 69–73 (NAIGL) each bind substrate. FMN contacts are provided by Asn99 and Asn127. Residue Asn127 participates in substrate binding. Catalysis depends on Cys130, which acts as the Nucleophile. 2 residues coordinate FMN: Lys165 and Ile191. 192–193 (NT) is a substrate binding site. FMN contacts are provided by residues Gly217, 243–244 (GG), and 265–266 (GT).

The protein belongs to the dihydroorotate dehydrogenase family. Type 1 subfamily. In terms of assembly, heterotetramer of 2 PyrK and 2 PyrD type B subunits. It depends on FMN as a cofactor.

Its subcellular location is the cytoplasm. The catalysed reaction is (S)-dihydroorotate + NAD(+) = orotate + NADH + H(+). The protein operates within pyrimidine metabolism; UMP biosynthesis via de novo pathway; orotate from (S)-dihydroorotate (NAD(+) route): step 1/1. Its function is as follows. Catalyzes the conversion of dihydroorotate to orotate with NAD(+) as electron acceptor. This Anoxybacillus flavithermus (strain DSM 21510 / WK1) protein is Dihydroorotate dehydrogenase B (NAD(+)), catalytic subunit (pyrD).